The sequence spans 259 residues: Small ribosomal subunit protein uS2 (259 aa).

The protein belongs to the universal ribosomal protein uS2 family.

This is Small ribosomal subunit protein uS2 from Streptococcus pneumoniae serotype 4 (strain ATCC BAA-334 / TIGR4).